The chain runs to 330 residues: UPF0353 protein MAP_3434 (330 aa).

2 helical membrane passes run 21–41 and 63–83; these read GMLLFGLVPLALLALYLVVQA and LPIAVSLLSLVLLTIALATPT. The VWFA domain maps to 94-289; the sequence is VIMLVIDMSQ…GELQKSYNAI (196 aa). The chain crosses the membrane as a helical span at residues 304 to 324; sequence AGWLRLGVLTALIATALALLI.

Belongs to the UPF0353 family.

It localises to the cell membrane. This Mycolicibacterium paratuberculosis (strain ATCC BAA-968 / K-10) (Mycobacterium paratuberculosis) protein is UPF0353 protein MAP_3434.